The sequence spans 534 residues: EH domain-containing protein 1 (534 aa).

Met-1 carries the post-translational modification N-acetylmethionine. Positions 55 to 286 constitute a Dynamin-type G domain; sequence FDNKPMVLLV…DLFKDIQSLP (232 aa). The G1 motif stretch occupies residues 65 to 72; it reads GQYSTGKT. Residue 65–72 participates in ATP binding; sequence GQYSTGKT. The interval 91–92 is G2 motif; sequence EP. A G3 motif region spans residues 153–156; the sequence is DTPG. Positions 198 to 227 form a coiled coil; that stretch reads DEFSEVIKALKNHEDKIRVVLNKADQIETQ. The interval 219 to 222 is G4 motif; sequence NKAD. Lys-220 lines the ATP pocket. Residue Ile-243 is a region of interest, G5 motif. An ATP-binding site is contributed by Trp-258. Residues 444-532 enclose the EH domain; that stretch reads DKPTYDEIFY…PHLVPPSKRR (89 aa). Residue Ser-456 is modified to Phosphoserine. Residues 476–511 enclose the EF-hand domain; it reads LPNTVLGKIWKLADVDRDGLLDDEEFALANHLIKVK. Positions 489, 491, 493, and 500 each coordinate Ca(2+).

It belongs to the TRAFAC class dynamin-like GTPase superfamily. Dynamin/Fzo/YdjA family. EHD subfamily. Homooligomer, and heterooligomer with EHD2, EHD3 and EHD4, ATP-binding is required for heterooligomerization. Interacts (via EH domain) with MICALL1 (via NPF1 motif); the interaction is direct and recruits EHD1 to membranes. Interacts with RAB35; the interaction is indirect through MICALL1 and recruits EHD1 to membranes. Interacts (via EH domain) with PACSIN2 (via NPF motifs); regulates localization to tubular recycling endosome membranes. Interacts with PACSIN1. Interacts with RAB8A. Interacts with FER1L5 (via second C2 domain). Interacts with MYOF. Interacts with ZFYVE20. Interacts (via EH domain) with RAB11FIP2.

Its subcellular location is the recycling endosome membrane. It localises to the early endosome membrane. The protein localises to the cell membrane. It is found in the cell projection. The protein resides in the cilium membrane. Functionally, ATP- and membrane-binding protein that controls membrane reorganization/tubulation upon ATP hydrolysis. Acts in early endocytic membrane fusion and membrane trafficking of recycling endosomes. Recruited to endosomal membranes upon nerve growth factor stimulation, indirectly regulates neurite outgrowth. Plays a role in myoblast fusion. Involved in the unidirectional retrograde dendritic transport of endocytosed BACE1 and in efficient sorting of BACE1 to axons implicating a function in neuronal APP processing. Plays a role in the formation of the ciliary vesicle (CV), an early step in cilium biogenesis. Proposed to be required for the fusion of distal appendage vesicles (DAVs) to form the CV by recruiting SNARE complex component SNAP29. Is required for recruitment of transition zone proteins CEP290, RPGRIP1L, TMEM67 and B9D2, and of IFT20 following DAV reorganization before Rab8-dependent ciliary membrane extension. Required for the loss of CCP110 form the mother centriole essential for the maturation of the basal body during ciliogenesis. The chain is EH domain-containing protein 1 from Bos taurus (Bovine).